Here is a 490-residue protein sequence, read N- to C-terminus: Cysteine protease 1 (490 aa).

The signal sequence occupies residues 1 to 31 (MAGGGGKSVAAALAMACFLLILAAFAPPAAA). Positions 32–154 (APPDIMSIIR…EAYRHDGVEA (123 aa)) are cleaved as a propeptide — activation peptide. Disulfide bonds link cysteine 177-cysteine 220, cysteine 211-cysteine 253, cysteine 311-cysteine 364, cysteine 395-cysteine 407, and cysteine 401-cysteine 422. The active site involves cysteine 180. Active-site residues include histidine 317 and asparagine 339. N-linked (GlcNAc...) asparagine glycosylation is present at asparagine 356. The propeptide at 379-490 (NPKPSPPSPA…FVVLNREDLV (112 aa)) is removed in mature form.

The protein belongs to the peptidase C1 family. Highly expressed in the tapetum and developing pollen of the anther locules. Weakly expressed in root and germinating seed, hardly in the anther-less-flower and not detected in leaf.

Its function is as follows. Cysteine protease that may play a role in pollen development. May be regulated by the transcription factor UDT1 in developing anthers and play a role in tapetum development. Positively regulated by the transcription factor TDR in developing anthers and may play a role in tapetum programmed cell death (PCD). In Oryza sativa subsp. japonica (Rice), this protein is Cysteine protease 1 (CP1).